A 1094-amino-acid polypeptide reads, in one-letter code: Carbamoyl phosphate synthase large chain (1094 aa).

The carboxyphosphate synthetic domain stretch occupies residues 1 to 402 (MPRRSDLHRI…AFQKALRALE (402 aa)). Residues Arg129, Arg169, Gly175, Gly176, Arg208, Leu210, Glu215, Gly241, Val242, His243, Gln285, and Glu299 each contribute to the ATP site. Positions 133–328 (GEAMEKIGLR…IARIGAKLAV (196 aa)) constitute an ATP-grasp 1 domain. Gln285, Glu299, and Asn301 together coordinate Mg(2+). Mn(2+)-binding residues include Gln285, Glu299, and Asn301. Residues 403–552 (TGRSGWTIAE…YLYGNYDEES (150 aa)) form an oligomerization domain region. The tract at residues 553–936 (EAATEGRKKV…AFMKSQLAAD (384 aa)) is carbamoyl phosphate synthetic domain. Residues 679-870 (EAIARELGIE…LPSVAARLML (192 aa)) enclose the ATP-grasp 2 domain. ATP contacts are provided by Arg715, Arg754, Leu756, Glu761, Gly786, Ile787, His788, Ser789, Gln829, and Glu841. Mg(2+) contacts are provided by Gln829, Glu841, and Asn843. Mn(2+)-binding residues include Gln829, Glu841, and Asn843. In terms of domain architecture, MGS-like spans 937–1077 (NALPREGTVF…QEWHEILRAP (141 aa)). Residues 937–1094 (NALPREGTVF…AGSTQPAGVA (158 aa)) are allosteric domain.

The protein belongs to the CarB family. As to quaternary structure, composed of two chains; the small (or glutamine) chain promotes the hydrolysis of glutamine to ammonia, which is used by the large (or ammonia) chain to synthesize carbamoyl phosphate. Tetramer of heterodimers (alpha,beta)4. Mg(2+) is required as a cofactor. Requires Mn(2+) as cofactor.

It carries out the reaction hydrogencarbonate + L-glutamine + 2 ATP + H2O = carbamoyl phosphate + L-glutamate + 2 ADP + phosphate + 2 H(+). The enzyme catalyses hydrogencarbonate + NH4(+) + 2 ATP = carbamoyl phosphate + 2 ADP + phosphate + 2 H(+). Its pathway is amino-acid biosynthesis; L-arginine biosynthesis; carbamoyl phosphate from bicarbonate: step 1/1. It participates in pyrimidine metabolism; UMP biosynthesis via de novo pathway; (S)-dihydroorotate from bicarbonate: step 1/3. Its function is as follows. Large subunit of the glutamine-dependent carbamoyl phosphate synthetase (CPSase). CPSase catalyzes the formation of carbamoyl phosphate from the ammonia moiety of glutamine, carbonate, and phosphate donated by ATP, constituting the first step of 2 biosynthetic pathways, one leading to arginine and/or urea and the other to pyrimidine nucleotides. The large subunit (synthetase) binds the substrates ammonia (free or transferred from glutamine from the small subunit), hydrogencarbonate and ATP and carries out an ATP-coupled ligase reaction, activating hydrogencarbonate by forming carboxy phosphate which reacts with ammonia to form carbamoyl phosphate. The polypeptide is Carbamoyl phosphate synthase large chain (Gemmatimonas aurantiaca (strain DSM 14586 / JCM 11422 / NBRC 100505 / T-27)).